The sequence spans 358 residues: Neutral protease 2 homolog PADG_00776 (358 aa).

The N-terminal stretch at 1–19 is a signal peptide; that stretch reads MRRVSGILAVAAFTISAFA. The propeptide occupies 20–185; sequence GVIQPVAKDA…MNQFVKIAKL (166 aa). Disulfide bonds link Cys-188-Cys-259 and Cys-266-Cys-284. Asn-249 carries N-linked (GlcNAc...) asparagine glycosylation. Residue His-309 participates in Zn(2+) binding. Residue Glu-310 is part of the active site. Positions 313 and 324 each coordinate Zn(2+).

It belongs to the peptidase M35 family. Zn(2+) is required as a cofactor.

It is found in the secreted. It catalyses the reaction Preferential cleavage of bonds with hydrophobic residues in P1'. Also 3-Asn-|-Gln-4 and 8-Gly-|-Ser-9 bonds in insulin B chain.. In terms of biological role, secreted metalloproteinase that allows assimilation of proteinaceous substrates. Shows high activities on basic nuclear substrates such as histone and protamine. This is Neutral protease 2 homolog PADG_00776 from Paracoccidioides brasiliensis (strain Pb18).